The sequence spans 28 residues: Potassium channel toxin alpha-KTx 9.5 (28 aa).

Intrachain disulfides connect Cys-3/Cys-19, Cys-6/Cys-24, and Cys-10/Cys-26. Val-28 bears the Valine amide mark.

In terms of tissue distribution, expressed by the venom gland.

It localises to the secreted. Functionally, blocks voltage-gated potassium channels Kv1.1/KCNA1 (IC(50)=145 nM), Kv1.2/KCNA2 (IC(50)=2.5 nM), and Kv1.3/KCNA3 (IC(50)=15). Also inhibits calcium-activated potassium channels (KCa/KCNN). The sequence is that of Potassium channel toxin alpha-KTx 9.5 from Buthus occitanus tunetanus (Common European scorpion).